The following is a 433-amino-acid chain: ATP-dependent protease ATPase subunit HslU (433 aa).

ATP-binding positions include Ile-18, 60–65 (GVGKTE), Asp-246, Glu-311, and Arg-383.

The protein belongs to the ClpX chaperone family. HslU subfamily. As to quaternary structure, a double ring-shaped homohexamer of HslV is capped on each side by a ring-shaped HslU homohexamer. The assembly of the HslU/HslV complex is dependent on binding of ATP.

It localises to the cytoplasm. ATPase subunit of a proteasome-like degradation complex; this subunit has chaperone activity. The binding of ATP and its subsequent hydrolysis by HslU are essential for unfolding of protein substrates subsequently hydrolyzed by HslV. HslU recognizes the N-terminal part of its protein substrates and unfolds these before they are guided to HslV for hydrolysis. This Cereibacter sphaeroides (strain ATCC 17029 / ATH 2.4.9) (Rhodobacter sphaeroides) protein is ATP-dependent protease ATPase subunit HslU.